The following is a 308-amino-acid chain: Ribosomal RNA large subunit methyltransferase F (308 aa).

The protein belongs to the methyltransferase superfamily. METTL16/RlmF family.

The protein resides in the cytoplasm. The enzyme catalyses adenosine(1618) in 23S rRNA + S-adenosyl-L-methionine = N(6)-methyladenosine(1618) in 23S rRNA + S-adenosyl-L-homocysteine + H(+). Specifically methylates the adenine in position 1618 of 23S rRNA. This Salmonella heidelberg (strain SL476) protein is Ribosomal RNA large subunit methyltransferase F.